Consider the following 838-residue polypeptide: Protein P (838 aa).

A terminal protein domain (TP) region spans residues Met-1–Gln-179. The segment at Glu-180–Leu-341 is spacer. Positions Leu-218 to Ala-242 are disordered. The segment at Glu-342–Gln-685 is polymerase/reverse transcriptase domain (RT). Residues Glu-352 to Ile-595 enclose the Reverse transcriptase domain. Mg(2+) is bound by residues Asp-424, Asp-546, and Asp-547.

It belongs to the hepadnaviridae P protein family.

It carries out the reaction DNA(n) + a 2'-deoxyribonucleoside 5'-triphosphate = DNA(n+1) + diphosphate. It catalyses the reaction Endonucleolytic cleavage to 5'-phosphomonoester.. With respect to regulation, activated by host HSP70 and HSP40 in vitro to be able to bind the epsilon loop of the pgRNA. Because deletion of the RNase H region renders the protein partly chaperone-independent, the chaperones may be needed indirectly to relieve occlusion of the RNA-binding site by this domain. Inhibited by several reverse-transcriptase inhibitors: Lamivudine, Adefovir and Entecavir. Its function is as follows. Multifunctional enzyme that converts the viral RNA genome into dsDNA in viral cytoplasmic capsids. This enzyme displays a DNA polymerase activity that can copy either DNA or RNA templates, and a ribonuclease H (RNase H) activity that cleaves the RNA strand of RNA-DNA heteroduplexes in a partially processive 3'- to 5'-endonucleasic mode. Neo-synthesized pregenomic RNA (pgRNA) are encapsidated together with the P protein, and reverse-transcribed inside the nucleocapsid. Initiation of reverse-transcription occurs first by binding the epsilon loop on the pgRNA genome, and is initiated by protein priming, thereby the 5'-end of (-)DNA is covalently linked to P protein. Partial (+)DNA is synthesized from the (-)DNA template and generates the relaxed circular DNA (RC-DNA) genome. After budding and infection, the RC-DNA migrates in the nucleus, and is converted into a plasmid-like covalently closed circular DNA (cccDNA). The activity of P protein does not seem to be necessary for cccDNA generation, and is presumably released from (+)DNA by host nuclear DNA repair machinery. The protein is Protein P of Homo sapiens (Human).